We begin with the raw amino-acid sequence, 153 residues long: UPF0756 membrane protein BA_4840/GBAA_4840/BAS4489 (153 aa).

Helical transmembrane passes span 8–28 (FLFI…TVAI), 54–74 (LGVT…EIGF), 87–107 (WIAL…VQLL), and 117–137 (LVFG…GPLI).

The protein belongs to the UPF0756 family.

It localises to the cell membrane. The chain is UPF0756 membrane protein BA_4840/GBAA_4840/BAS4489 from Bacillus anthracis.